Here is a 434-residue protein sequence, read N- to C-terminus: MQLLAIGINHTTAPVSLRERVAFPLEQIKPALGALRTHLAGRNGTEAAILSTCNRTEIYCATDILKPGAEGFEHTLRWLSQHHNVPASDLAPHLYSLPQSEAVRHAFRVASGLDSMVLGETQILGQLKDAVRTAGEAGSLGTYLNQLFQRTFAVAKEVRGQTEIGAHSVSMAAAAVRLAQRIFESVSTQRVLFIGAGEMIELCATHFAAQKPRQVVVANRTVERGEKLAEQLAEQGLTTQAIRLQELGERLHEFDIVVSCTASSLPIIGLGAVERAVKRRKHRPIMMVDLAVPRDVEPEVARLDDVFLYTVDDLGAVVREGNALRQAAVAQAEAIIESRVQNFMHWLETRSVVPVIRELQTAGESIRQAELERARRMLARGDDPEAVLEALSGALTRKFLHGPTHALNHMQGEDREALVRLVPGLFRQSSHSER.

Substrate contacts are provided by residues 52–55 (TCNR), Ser115, 120–122 (ETQ), and Gln126. Cys53 (nucleophile) is an active-site residue. Residue 195 to 200 (GAGEMI) participates in NADP(+) binding.

This sequence belongs to the glutamyl-tRNA reductase family. Homodimer.

It carries out the reaction (S)-4-amino-5-oxopentanoate + tRNA(Glu) + NADP(+) = L-glutamyl-tRNA(Glu) + NADPH + H(+). It participates in porphyrin-containing compound metabolism; protoporphyrin-IX biosynthesis; 5-aminolevulinate from L-glutamyl-tRNA(Glu): step 1/2. Its function is as follows. Catalyzes the NADPH-dependent reduction of glutamyl-tRNA(Glu) to glutamate 1-semialdehyde (GSA). In Cupriavidus pinatubonensis (strain JMP 134 / LMG 1197) (Cupriavidus necator (strain JMP 134)), this protein is Glutamyl-tRNA reductase.